The primary structure comprises 277 residues: Carbonyl reductase [NADPH] 1 (277 aa).

NADP(+)-binding positions include 10 to 34 (VTGS…GEVV), 63 to 64 (DI), and asparagine 90. A Phosphoserine modification is found at serine 30. Residues 95 to 97 (FKV) and glutamine 106 each bind glutathione. Serine 140 contacts substrate. 193-194 (AY) is a binding site for glutathione. The active-site Proton acceptor is the tyrosine 194. Residues 194-198 (YGVTK) and 231-233 (VRT) each bind NADP(+).

It belongs to the short-chain dehydrogenases/reductases (SDR) family. In terms of assembly, monomer.

Its subcellular location is the cytoplasm. It carries out the reaction a secondary alcohol + NADP(+) = a ketone + NADPH + H(+). It catalyses the reaction prostaglandin F2alpha + NADP(+) = prostaglandin E2 + NADPH + H(+). The catalysed reaction is prostaglandin E1 + NADP(+) = 15-oxoprostaglandin E1 + NADPH + H(+). The enzyme catalyses prostaglandin D2 + NADP(+) = 15-oxoprostaglandin D2 + NADPH + H(+). It carries out the reaction menadione + NADPH + H(+) = menadiol + NADP(+). It catalyses the reaction prostaglandin E2 + NADP(+) = 15-oxoprostaglandin E2 + NADPH + H(+). The catalysed reaction is prostaglandin F2alpha + NADP(+) = 15-oxoprostaglandin F2alpha + NADPH + H(+). The enzyme catalyses daunorubicin + NADPH + H(+) = 13-dihydrodaunorubicin + NADP(+). It carries out the reaction S-nitrosoglutathione + NADPH + H(+) = S-(hydroxysulfenamide)glutathione + NADP(+). It catalyses the reaction a primary alcohol + NADP(+) = an aldehyde + NADPH + H(+). The catalysed reaction is cortisol + NADPH + H(+) = 20beta-dihydrocortisol + NADP(+). The enzyme catalyses corticosterone + NADPH + H(+) = 20beta-dihydrocorticosterone + NADP(+). Functionally, NADPH-dependent reductase with broad substrate specificity. Catalyzes the reduction of a wide variety of carbonyl compounds including quinones, prostaglandins, menadione, plus various xenobiotics. Catalyzes the reduction of the antitumor anthracyclines doxorubicin and daunorubicin to the cardiotoxic compounds doxorubicinol and daunorubicinol. Can convert prostaglandin E to prostaglandin F2-alpha. Can bind glutathione, which explains its higher affinity for glutathione-conjugated substrates. Catalyzes the reduction of S-nitrosoglutathione. In addition, participates in the glucocorticoid metabolism by catalyzing the NADPH-dependent cortisol/corticosterone into 20beta-dihydrocortisol (20b-DHF) or 20beta-corticosterone (20b-DHB), which are weak agonists of NR3C1 and NR3C2 in adipose tissue. The protein is Carbonyl reductase [NADPH] 1 of Macaca fascicularis (Crab-eating macaque).